A 292-amino-acid chain; its full sequence is Protoheme IX farnesyltransferase (292 aa).

The next 9 membrane-spanning stretches (helical) occupy residues 13–33, 35–55, 84–104, 106–126, 135–155, 161–181, 206–226, 231–251, and 263–283; these read ILFG…QGHV, FLLL…GCVV, TALI…WFWV, PYSF…YSLW, TIIG…AVTH, ALLI…AIAI, VECL…YCFG, FFLL…IIGF, and LFLF…FTYQ.

This sequence belongs to the UbiA prenyltransferase family. Protoheme IX farnesyltransferase subfamily.

It is found in the cell inner membrane. It carries out the reaction heme b + (2E,6E)-farnesyl diphosphate + H2O = Fe(II)-heme o + diphosphate. The protein operates within porphyrin-containing compound metabolism; heme O biosynthesis; heme O from protoheme: step 1/1. Its function is as follows. Converts heme B (protoheme IX) to heme O by substitution of the vinyl group on carbon 2 of heme B porphyrin ring with a hydroxyethyl farnesyl side group. This Acinetobacter baylyi (strain ATCC 33305 / BD413 / ADP1) protein is Protoheme IX farnesyltransferase.